The primary structure comprises 468 residues: Keratin, type I cytoskeletal 26 (468 aa).

Residues 1 to 82 (MSFRLSGGSR…GNEHSLLSGN (82 aa)) are head. The interval 83 to 118 (EKVTMQNLNDRLASYLDHVHALEEANADLEQKIKGW) is coil 1A. The IF rod domain occupies 83–398 (EKVTMQNLND…NLLDGEERKS (316 aa)). The segment at 119–140 (YEKCEPGSSREHDHDYSRYFSV) is linker 1. A coil 1B region spans residues 141–232 (IEDLKRQIIS…KSHEEEMEVL (92 aa)). The interval 233–255 (QYTAGGNVNVEMNATPGVDLTVL) is linker 12. Residues 256-394 (LNNMRAEYED…DIYCNLLDGE (139 aa)) are coil 2. Residues 395–465 (ERKSKSTCYK…NITVEQRVPS (71 aa)) are tail.

The protein belongs to the intermediate filament family. Heterotetramer of two type I and two type II keratins. Strongly expressed in skin and scalp, and weak expression observed in thymus and tongue. In the hair follicle, expression is restricted to the mid- to upper inner root sheath cuticle, being present slightly above the apex of the dermal papilla (at protein level).

The protein is Keratin, type I cytoskeletal 26 of Homo sapiens (Human).